A 685-amino-acid polypeptide reads, in one-letter code: Exocyst complex component 8 (685 aa).

A PH domain is found at 151–251 (YLVYNGDLTE…WLEILEQTKK (101 aa)). Basic and acidic residues predominate over residues 254 to 263 (ALNEKQKQEE). Residues 254 to 273 (ALNEKQKQEETTPQLPVVPE) are disordered.

This sequence belongs to the EXO84 family. As to quaternary structure, the exocyst complex is composed of exoc1, exoc2, exoc3, exoc4, exoc5, exoc6, exoc7 and exoc8.

It localises to the cytoplasm. The protein resides in the perinuclear region. It is found in the cell projection. Its subcellular location is the growth cone. Its function is as follows. Component of the exocyst complex involved in the docking of exocytic vesicles with fusion sites on the plasma membrane. The polypeptide is Exocyst complex component 8 (exoc8) (Xenopus laevis (African clawed frog)).